The chain runs to 103 residues: Cell division protein CrgA (103 aa).

2 helical membrane passes run 49-69 (FVPL…VYYL) and 80-100 (IGAW…LMTM).

This sequence belongs to the CrgA family.

The protein localises to the cell membrane. Its function is as follows. Involved in cell division. This chain is Cell division protein CrgA, found in Bifidobacterium longum (strain NCC 2705).